A 245-amino-acid polypeptide reads, in one-letter code: 1-(5-phosphoribosyl)-5-[(5-phosphoribosylamino)methylideneamino] imidazole-4-carboxamide isomerase (245 aa).

The Proton acceptor role is filled by D7. The active-site Proton donor is the D129.

The protein belongs to the HisA/HisF family.

It is found in the cytoplasm. The catalysed reaction is 1-(5-phospho-beta-D-ribosyl)-5-[(5-phospho-beta-D-ribosylamino)methylideneamino]imidazole-4-carboxamide = 5-[(5-phospho-1-deoxy-D-ribulos-1-ylimino)methylamino]-1-(5-phospho-beta-D-ribosyl)imidazole-4-carboxamide. Its pathway is amino-acid biosynthesis; L-histidine biosynthesis; L-histidine from 5-phospho-alpha-D-ribose 1-diphosphate: step 4/9. This chain is 1-(5-phosphoribosyl)-5-[(5-phosphoribosylamino)methylideneamino] imidazole-4-carboxamide isomerase, found in Shewanella sp. (strain MR-7).